A 371-amino-acid polypeptide reads, in one-letter code: Mannose-1-phosphate guanylyltransferase catalytic subunit beta (371 aa).

The segment at 14-233 is substrate-binding domain; that stretch reads RALILVGGYG…TGFWMDIGQP (220 aa). Residue D122 participates in GDP-alpha-D-mannose binding. Position 122 (D122) interacts with Mg(2+). K173 is a catalytic residue. D229 contacts GDP-alpha-D-mannose. D229 is a binding site for Mg(2+). Residues 256–371 form a hexapeptide repeat domain region; the sequence is YTGPGVVGNV…ASVPEPQIIM (116 aa).

The protein belongs to the transferase hexapeptide repeat family. As to quaternary structure, component of the GMPPA-GMPPB mannose-1-phosphate guanylyltransferase complex composed of 4 Gmppa subunits and 8 Gmppb subunits; the complex is organized into three layers, a central layer made up of 2 Gmppa dimers sandwiched between two layers each made up of 2 Gmppb dimers. Gmppb catalytic activity is reduced when part of the complex and binding of GDP-alpha-D-Mannose by Gmppa induces allosteric feedback inhibition of Gmppb. Mg(2+) is required as a cofactor.

The catalysed reaction is alpha-D-mannose 1-phosphate + GTP + H(+) = GDP-alpha-D-mannose + diphosphate. It functions in the pathway nucleotide-sugar biosynthesis; GDP-alpha-D-mannose biosynthesis; GDP-alpha-D-mannose from alpha-D-mannose 1-phosphate (GTP route): step 1/1. Its activity is regulated as follows. Enzyme activity is reduced by incorporation into the GMPPA-GMPPB mannose-1-phosphate guanylyltransferase complex. Allosterically inhibited, when part of the GMPPA-GMPPB complex, by GDP-alpha-D-mannose binding to Gmppa. In terms of biological role, catalytic subunit of the GMPPA-GMPPB mannose-1-phosphate guanylyltransferase complex. Catalyzes the formation of GDP-mannose, an essential precursor of glycan moieties of glycoproteins and glycolipids. Can catalyze the reverse reaction in vitro. Together with GMPPA regulates GDP-alpha-D-mannose levels. This chain is Mannose-1-phosphate guanylyltransferase catalytic subunit beta, found in Drosophila pseudoobscura pseudoobscura (Fruit fly).